A 434-amino-acid polypeptide reads, in one-letter code: Glycoprotein U20 (434 aa).

An N-terminal signal peptide occupies residues 1 to 15; the sequence is MITVFVACLFQCVSS. The chain crosses the membrane as a helical span at residues 322 to 342; it reads LLWIFIVIPIAAGCMFLYILT.

The protein resides in the host endoplasmic reticulum membrane. Its subcellular location is the host lysosome membrane. Its function is as follows. Plays a role in the down-regulation of the host stress-induced NKG2D ligand UBPL1, which enables immune cells expressing the NKG2D receptor to recognize and annihilate infected cells prior to viral spread. The protein is Glycoprotein U20 (U20) of Human herpesvirus 6B (strain Z29) (HHV-6 variant B).